We begin with the raw amino-acid sequence, 260 residues long: Uroplakin-1b (260 aa).

Topologically, residues 1–12 (MAKDDSSVRCFQ) are cytoplasmic. The chain crosses the membrane as a helical span at residues 13-38 (GLLIFGNVIVGMCGIALTAECIFFVS). The Extracellular portion of the chain corresponds to 39–60 (DQHSLYPLLEATDNDDIYGAAW). Residues 61–81 (IGMFVGICLFCLSVLGIVGIM) form a helical membrane-spanning segment. The Cytoplasmic segment spans residues 82–86 (KSNRK). The helical transmembrane segment at 87-107 (ILLAYFILMFIVYGFEVASCI) threads the bilayer. At 108 to 229 (TAATQRDFFT…ELISGPMNRH (122 aa)) the chain is on the extracellular side. A helical transmembrane segment spans residues 230–250 (AWGVAWFGFAILCWTFWVLLG). Residues 251–260 (TMFYWSRIEY) lie on the Cytoplasmic side of the membrane.

It belongs to the tetraspanin (TM4SF) family. Heterodimer with uroplakin-3A (UPK3A) or uroplakin-3B (UPK3B).

The protein localises to the membrane. Functionally, component of the asymmetric unit membrane (AUM); a highly specialized biomembrane elaborated by terminally differentiated urothelial cells. This chain is Uroplakin-1b (UPK1B), found in Neovison vison (American mink).